A 156-amino-acid polypeptide reads, in one-letter code: Small ribosomal subunit protein uS7 (156 aa).

It belongs to the universal ribosomal protein uS7 family. In terms of assembly, part of the 30S ribosomal subunit. Contacts proteins S9 and S11.

In terms of biological role, one of the primary rRNA binding proteins, it binds directly to 16S rRNA where it nucleates assembly of the head domain of the 30S subunit. Is located at the subunit interface close to the decoding center, probably blocks exit of the E-site tRNA. In Pseudoalteromonas translucida (strain TAC 125), this protein is Small ribosomal subunit protein uS7.